We begin with the raw amino-acid sequence, 342 residues long: Methionyl-tRNA formyltransferase (342 aa).

119–122 (SILP) lines the (6S)-5,6,7,8-tetrahydrofolate pocket.

This sequence belongs to the Fmt family.

It catalyses the reaction L-methionyl-tRNA(fMet) + (6R)-10-formyltetrahydrofolate = N-formyl-L-methionyl-tRNA(fMet) + (6S)-5,6,7,8-tetrahydrofolate + H(+). Its function is as follows. Attaches a formyl group to the free amino group of methionyl-tRNA(fMet). The formyl group appears to play a dual role in the initiator identity of N-formylmethionyl-tRNA by promoting its recognition by IF2 and preventing the misappropriation of this tRNA by the elongation apparatus. The sequence is that of Methionyl-tRNA formyltransferase from Nostoc sp. (strain PCC 7120 / SAG 25.82 / UTEX 2576).